The chain runs to 255 residues: Transmembrane protein 81 (255 aa).

Positions 1–30 (MKVLATSFVLGSLGLAFYLPLVVTTPKTLA) are cleaved as a signal peptide. Topologically, residues 31–226 (IPEKLQEAVG…HPKWKKKVAS (196 aa)) are extracellular. N-linked (GlcNAc...) asparagine glycosylation is present at N45. Residues 83 to 171 (TNWICGMLHF…VQLVKNLRLV (89 aa)) form the Ig-like domain. C104 and C160 form a disulfide bridge. A helical transmembrane segment spans residues 227–247 (ALGIGIAIGVVGGVLVRIVLC). The Cytoplasmic portion of the chain corresponds to 248 to 255 (ALRGGLQQ).

Forms a complex with IZUMO1 and SPACA6 on spermatocyte cell membrane required for fertilization. As to expression, highly expressed in sperm (at protein level).

Its subcellular location is the cell membrane. In terms of biological role, essential fertilization factor required for male fertility. Part of a conserved trimeric sperm complex with the essential fertilization factors IZUMO1 and SPACA6 which bridges sperm and oocyte membranes during fertilization by binding to IZUMO1R/JUNO on the oocyte. The sequence is that of Transmembrane protein 81 from Homo sapiens (Human).